Reading from the N-terminus, the 129-residue chain is MLKTLALISIGASCGAILRWFLGLMLNAIFLPIPLGTLAANLLGGYLIGVAVSMFNALSAVGPEFRLLIITGFLGGLTTFSTFTAEIGVLLQGQRIMTAVAAIVLHVCGSLIMMLLGMGTFALLRTCFR.

The next 3 helical transmembrane spans lie at 20 to 40 (WFLG…TLAA), 67 to 87 (LLII…TAEI), and 96 to 116 (IMTA…MMLL). Residues glycine 75 and threonine 78 each contribute to the Na(+) site.

It belongs to the fluoride channel Fluc/FEX (TC 1.A.43) family.

It localises to the cell inner membrane. The enzyme catalyses fluoride(in) = fluoride(out). Its activity is regulated as follows. Na(+) is not transported, but it plays an essential structural role and its presence is essential for fluoride channel function. Functionally, fluoride-specific ion channel. Important for reducing fluoride concentration in the cell, thus reducing its toxicity. This chain is Fluoride-specific ion channel FluC, found in Desulfovibrio desulfuricans (strain ATCC 27774 / DSM 6949 / MB).